A 261-amino-acid polypeptide reads, in one-letter code: Transcription antitermination protein NusB (261 aa).

A disordered region spans residues 168-261 (ARVEDQPSDD…DLHKKDTTDD (94 aa)). Residues 217-228 (VDTTSGNASDPE) show a composition bias toward polar residues. Residues 242–261 (PTSKDHELATDLHKKDTTDD) show a composition bias toward basic and acidic residues.

Belongs to the NusB family.

Involved in transcription antitermination. Required for transcription of ribosomal RNA (rRNA) genes. Binds specifically to the boxA antiterminator sequence of the ribosomal RNA (rrn) operons. The polypeptide is Transcription antitermination protein NusB (Cutibacterium acnes (strain DSM 16379 / KPA171202) (Propionibacterium acnes)).